The sequence spans 83 residues: uncharacterized protein (83 aa).

Positions 15 to 36 are disordered; sequence RLKNGRGNKTMSESDYNTSDSG. Over residues 21–35 the composition is skewed to polar residues; that stretch reads GNKTMSESDYNTSDS.

This is an uncharacterized protein from Aedes vexans (Inland floodwater mosquito).